We begin with the raw amino-acid sequence, 198 residues long: Molybdenum cofactor guanylyltransferase (198 aa).

Residues 14-16 (LAG), Lys27, Asp73, and Asp103 each bind GTP. A Mg(2+)-binding site is contributed by Asp103.

It belongs to the MobA family. As to quaternary structure, monomer. Mg(2+) is required as a cofactor.

Its subcellular location is the cytoplasm. The enzyme catalyses Mo-molybdopterin + GTP + H(+) = Mo-molybdopterin guanine dinucleotide + diphosphate. Its function is as follows. Transfers a GMP moiety from GTP to Mo-molybdopterin (Mo-MPT) cofactor (Moco or molybdenum cofactor) to form Mo-molybdopterin guanine dinucleotide (Mo-MGD) cofactor. The polypeptide is Molybdenum cofactor guanylyltransferase (Pseudomonas paraeruginosa (strain DSM 24068 / PA7) (Pseudomonas aeruginosa (strain PA7))).